The following is a 239-amino-acid chain: Zinc finger protein 575 (239 aa).

The interval 1 to 62 (MLGGSVKSEV…PQRPHRCPDC (62 aa)) is disordered. Over residues 22-31 (PETKAPHQDL) the composition is skewed to basic and acidic residues. A compositionally biased stretch (basic residues) spans 46–57 (RPRRRPPPQRPH). 6 C2H2-type zinc fingers span residues 57–79 (HRCP…RLAH), 85–107 (HPCP…RLTH), 113–135 (HSCP…LWTH), 141–163 (YPCP…RHTH), 171–193 (YPCP…RLCH), and 207–230 (HRCS…RSHH).

It belongs to the krueppel C2H2-type zinc-finger protein family.

It localises to the nucleus. May be involved in transcriptional regulation. This is Zinc finger protein 575 (Znf575) from Mus musculus (Mouse).